The chain runs to 307 residues: Cyclin-dependent kinase 5 activator 1 (307 aa).

The N-myristoyl glycine moiety is linked to residue Gly2. The residue at position 8 (Ser8) is a Phosphoserine; by CDK5. The segment at 97–133 (TFAQPPPAQPPAPPASQLSGSQTGVSSSVKKAPHPAI) is disordered. The span at 100–110 (QPPPAQPPAPP) shows a compositional bias: pro residues. The segment covering 112–125 (SQLSGSQTGVSSSV) has biased composition (polar residues). A Phosphothreonine; by CDK5 modification is found at Thr138.

This sequence belongs to the cyclin-dependent kinase 5 activator family. Heterodimer composed of a catalytic subunit CDK5 and a regulatory subunit CDK5R1 (p25) and macromolecular complex composed of at least CDK5, CDK5R1 (p35) and CDK5RAP1 or CDK5RAP2 or CDK5RAP3. Only the heterodimer shows kinase activity. Interacts with EPHA4 and NGEF; may mediate the activation of NGEF by EPHA4. Interacts with RASGRF2. The complex p35/CDK5 interacts with CLOCK. Post-translationally, the p35 form is proteolytically cleaved by calpain, giving rise to the p25 form. P35 has a 5 to 10 fold shorter half-life compared to p25. The conversion results in deregulation of the CDK5 kinase: p25/CDK5 kinase displays an increased and altered tau phosphorylation in comparison to the p35/CDK5 kinase in vivo. Myristoylated. A proper myristoylation signal is essential for the proper distribution of p35. In terms of processing, phosphorylation at Ser-8 and Thr-138 by CDK5 prevents calpain-mediated proteolysis. Post-translationally, ubiquitinated, leading to its degradation: degradation of p35 by proteasome results in down-regulation of CDK5 activity. During this process, CDK5 phosphorylates p35 and induces its ubiquitination and subsequent degradation. Ubiquitinated by the CRL2(FEM1B) complex, which recognizes the -Gly-Leu-Asp-Arg C-degron at the C-terminus, leading to its degradation. In terms of tissue distribution, brain and neuron specific.

Its subcellular location is the cell membrane. The protein resides in the cell projection. The protein localises to the neuron projection. It is found in the nucleus. It localises to the cytoplasm. Its subcellular location is the perinuclear region. The protein resides in the perikaryon. Functionally, p35 is a neuron specific activator of CDK5. The complex p35/CDK5 is required for neurite outgrowth and cortical lamination. Involved in dendritic spine morphogenesis by mediating the EFNA1-EPHA4 signaling. Activator of TPKII. The complex p35/CDK5 participates in the regulation of the circadian clock by modulating the function of CLOCK protein: phosphorylates CLOCK at 'Thr-451' and 'Thr-461' and regulates the transcriptional activity of the CLOCK-BMAL1 heterodimer in association with altered stability and subcellular distribution. The polypeptide is Cyclin-dependent kinase 5 activator 1 (Cdk5r1) (Rattus norvegicus (Rat)).